A 381-amino-acid chain; its full sequence is Erythronate-4-phosphate dehydrogenase (381 aa).

Substrate is bound by residues serine 45 and threonine 67. Residues aspartate 148, 207 to 209 (ASR), and aspartate 233 each bind NAD(+). Arginine 209 is an active-site residue. Residue glutamate 238 is part of the active site. Histidine 255 acts as the Proton donor in catalysis. Glycine 258 provides a ligand contact to NAD(+).

This sequence belongs to the D-isomer specific 2-hydroxyacid dehydrogenase family. PdxB subfamily. As to quaternary structure, homodimer.

The protein localises to the cytoplasm. The catalysed reaction is 4-phospho-D-erythronate + NAD(+) = (R)-3-hydroxy-2-oxo-4-phosphooxybutanoate + NADH + H(+). Its pathway is cofactor biosynthesis; pyridoxine 5'-phosphate biosynthesis; pyridoxine 5'-phosphate from D-erythrose 4-phosphate: step 2/5. Catalyzes the oxidation of erythronate-4-phosphate to 3-hydroxy-2-oxo-4-phosphonooxybutanoate. The sequence is that of Erythronate-4-phosphate dehydrogenase from Idiomarina loihiensis (strain ATCC BAA-735 / DSM 15497 / L2-TR).